Here is a 580-residue protein sequence, read N- to C-terminus: Tetratricopeptide repeat protein 39C (580 aa).

TPR repeat units follow at residues 312-345 (SLFMFFKGRIQRLECQINSALTSFHTALELAVDQ), 350-383 (HVCLYEIGWCSMIELNFKDAFDSFERLKNESRWS), and 482-515 (GLKHLLLGAIHKCLGNSQDALQFFQRAARDELCR).

Belongs to the TTC39 family.

The chain is Tetratricopeptide repeat protein 39C (Ttc39c) from Mus musculus (Mouse).